Reading from the N-terminus, the 182-residue chain is Large ribosomal subunit protein uL10 (182 aa).

It belongs to the universal ribosomal protein uL10 family. As to quaternary structure, part of the ribosomal stalk of the 50S ribosomal subunit. The N-terminus interacts with L11 and the large rRNA to form the base of the stalk. The C-terminus forms an elongated spine to which L12 dimers bind in a sequential fashion forming a multimeric L10(L12)X complex.

Forms part of the ribosomal stalk, playing a central role in the interaction of the ribosome with GTP-bound translation factors. This Chloroflexus aurantiacus (strain ATCC 29364 / DSM 637 / Y-400-fl) protein is Large ribosomal subunit protein uL10.